We begin with the raw amino-acid sequence, 41 residues long: Urotensin-1 (41 aa).

At valine 41 the chain carries Valine amide.

It belongs to the sauvagine/corticotropin-releasing factor/urotensin I family.

It is found in the secreted. Urotensin is found in the teleost caudal neurosecretory system. It has a suggested role in osmoregulation and as a corticotropin-releasing factor. This is Urotensin-1 from Catostomus commersonii (White sucker).